We begin with the raw amino-acid sequence, 363 residues long: Phosphoserine aminotransferase (363 aa).

Residue arginine 42 participates in L-glutamate binding. Pyridoxal 5'-phosphate is bound by residues 76-77, tryptophan 101, threonine 151, aspartate 170, and glutamine 193; that span reads AS. Lysine 194 is modified (N6-(pyridoxal phosphate)lysine). 234 to 235 is a pyridoxal 5'-phosphate binding site; the sequence is NT.

It belongs to the class-V pyridoxal-phosphate-dependent aminotransferase family. SerC subfamily. In terms of assembly, homodimer. Pyridoxal 5'-phosphate serves as cofactor.

Its subcellular location is the cytoplasm. The catalysed reaction is O-phospho-L-serine + 2-oxoglutarate = 3-phosphooxypyruvate + L-glutamate. It catalyses the reaction 4-(phosphooxy)-L-threonine + 2-oxoglutarate = (R)-3-hydroxy-2-oxo-4-phosphooxybutanoate + L-glutamate. It participates in amino-acid biosynthesis; L-serine biosynthesis; L-serine from 3-phospho-D-glycerate: step 2/3. Catalyzes the reversible conversion of 3-phosphohydroxypyruvate to phosphoserine and of 3-hydroxy-2-oxo-4-phosphonooxybutanoate to phosphohydroxythreonine. The chain is Phosphoserine aminotransferase from Listeria monocytogenes serovar 1/2a (strain ATCC BAA-679 / EGD-e).